The following is a 572-amino-acid chain: MKAQLMITPTASDRTVRFADFPTLTQALDFAATGETGINLYSLRGELVEALPYAKLRDEAVVLARRLLAIGAKVGDSVALLAETDGDFVRAFFACQYAGLLPAPMALPTPLGGREAYIEQISNLARSAKANILIGPVGLKDWVAEIGARAGLAFAGVLADLPEDAGAALPTITPEDPCYLQFSSGSTRTPTGVLVRHKALMANCVAITRDGLQVRASDRAISWLPLYHDMGLIGFLLSPLSCQMTVDLLPTGAFVRRPLLWIDLIGRNKATIAYSPTFGYELCARRVQGQSLENYNLSHWRSAGLGGDMIRMPPLKAFVEAFAPAGFSDKAFVASYGMAEATLALSMAPLGKGLRAETLDVERLERDALAVDAPEGSERARDFARCGPALPDHFLEVRGDDGQVLPERGVGRIFAKGPSVMSAYFANPEETARVLAADGWLDTGDIGFKIDGEIVITGRAKDLIILNGRNIWPQDLEWTADNEIDGLRSGDVCAFAIPAEPEDEVVVLVQARGGDADSRAALRESVATLLRTRHGVEAKVKLVGAHALPQTSSGKLSRSKAKTAYLAGTYGD.

This sequence belongs to the ATP-dependent AMP-binding enzyme family.

It participates in lipid metabolism; sphingolipid metabolism. Functionally, involved in de novo bacterial ceramide synthesis. The protein is Putative acyl-CoA synthetase CCNA_01223 of Caulobacter vibrioides (strain NA1000 / CB15N) (Caulobacter crescentus).